Consider the following 326-residue polypeptide: Delta-aminolevulinic acid dehydratase (326 aa).

Residues cysteine 119, cysteine 121, and cysteine 129 each contribute to the Zn(2+) site. Residue lysine 198 is the Schiff-base intermediate with substrate of the active site. 5-aminolevulinate contacts are provided by arginine 208 and arginine 220. Glutamate 236 contributes to the Mg(2+) binding site. The Schiff-base intermediate with substrate role is filled by lysine 251. The 5-aminolevulinate site is built by serine 277 and tyrosine 316.

It belongs to the ALAD family. Homooctamer. Requires Zn(2+) as cofactor.

The catalysed reaction is 2 5-aminolevulinate = porphobilinogen + 2 H2O + H(+). Its pathway is porphyrin-containing compound metabolism; protoporphyrin-IX biosynthesis; coproporphyrinogen-III from 5-aminolevulinate: step 1/4. Functionally, catalyzes an early step in the biosynthesis of tetrapyrroles. Binds two molecules of 5-aminolevulinate per subunit, each at a distinct site, and catalyzes their condensation to form porphobilinogen. The chain is Delta-aminolevulinic acid dehydratase (hemB) from Synechococcus elongatus (strain ATCC 33912 / PCC 7942 / FACHB-805) (Anacystis nidulans R2).